Consider the following 315-residue polypeptide: Glutaminase (315 aa).

7 residues coordinate substrate: serine 70, asparagine 120, glutamate 166, asparagine 173, tyrosine 197, tyrosine 249, and valine 267.

Belongs to the glutaminase family. In terms of assembly, homotetramer.

The enzyme catalyses L-glutamine + H2O = L-glutamate + NH4(+). This chain is Glutaminase, found in Sinorhizobium fredii (strain NBRC 101917 / NGR234).